Reading from the N-terminus, the 407-residue chain is Argininosuccinate synthase (407 aa).

Residues 16-24 (AYSGGLDTS) and Ala-44 each bind ATP. L-citrulline is bound by residues Tyr-96 and Ser-101. Residue Gly-126 coordinates ATP. L-aspartate contacts are provided by Thr-128, Asn-132, and Asp-133. Position 132 (Asn-132) interacts with L-citrulline. Arg-136, Ser-185, Ser-194, Glu-270, and Tyr-282 together coordinate L-citrulline.

Belongs to the argininosuccinate synthase family. Type 1 subfamily. Homotetramer.

The protein resides in the cytoplasm. It catalyses the reaction L-citrulline + L-aspartate + ATP = 2-(N(omega)-L-arginino)succinate + AMP + diphosphate + H(+). The protein operates within amino-acid biosynthesis; L-arginine biosynthesis; L-arginine from L-ornithine and carbamoyl phosphate: step 2/3. The polypeptide is Argininosuccinate synthase (Shewanella loihica (strain ATCC BAA-1088 / PV-4)).